Consider the following 342-residue polypeptide: MENILDFTLEELKEWLISKEEKAFRAKQVFDWIYNKLIFDFNNMKNIPYKTKNLLSDNFYVGVPKVVKKLMSQDKNTYKFLFEYKDGNIIESVVMKYKHGNSICVSTQVGCRMGCKFCASTLDGVIRNLTSGEILSQIMAAQKEIGERISNVVLMGSGEPLDNFQNVTKFLDLVTSDTTLNIGQRHITLSTCGIVPKIKELADKNYNITLAISLHSPEDLLRKEMMPIANKYSIKELMEACDYYINKTNRRITFEYALVKGKNDSIKEAKKLSTVLKGKLCHVNLIPVNEIKENSYEKSTLKNIESFGNILKENGIETTIRREMGADINAACGQLRRSYVSK.

The active-site Proton acceptor is the Glu-91. A Radical SAM core domain is found at 97-327 (YKHGNSICVS…TTIRREMGAD (231 aa)). A disulfide bridge links Cys-104 with Cys-332. Residues Cys-111, Cys-115, and Cys-118 each coordinate [4Fe-4S] cluster. S-adenosyl-L-methionine is bound by residues 158 to 159 (GE), Ser-190, 213 to 215 (SLH), and Asn-289. Cys-332 serves as the catalytic S-methylcysteine intermediate.

Belongs to the radical SAM superfamily. RlmN family. The cofactor is [4Fe-4S] cluster.

It is found in the cytoplasm. It catalyses the reaction adenosine(2503) in 23S rRNA + 2 reduced [2Fe-2S]-[ferredoxin] + 2 S-adenosyl-L-methionine = 2-methyladenosine(2503) in 23S rRNA + 5'-deoxyadenosine + L-methionine + 2 oxidized [2Fe-2S]-[ferredoxin] + S-adenosyl-L-homocysteine. It carries out the reaction adenosine(37) in tRNA + 2 reduced [2Fe-2S]-[ferredoxin] + 2 S-adenosyl-L-methionine = 2-methyladenosine(37) in tRNA + 5'-deoxyadenosine + L-methionine + 2 oxidized [2Fe-2S]-[ferredoxin] + S-adenosyl-L-homocysteine. Specifically methylates position 2 of adenine 2503 in 23S rRNA and position 2 of adenine 37 in tRNAs. The polypeptide is Probable dual-specificity RNA methyltransferase RlmN (Clostridium botulinum (strain Langeland / NCTC 10281 / Type F)).